The chain runs to 1257 residues: Receptor tyrosine-protein kinase erbB-2 (1257 aa).

An N-terminal signal peptide occupies residues 1–22 (MELAAWCRWGFLLALLPPGIAG). At 23 to 654 (TQVCTGTDMK…PAEQRASPVT (632 aa)) the chain is on the extracellular side. Cys26 and Cys53 are joined by a disulfide. N-linked (GlcNAc...) asparagine glycosylation is found at Asn68 and Asn188. Cystine bridges form between Cys163/Cys193, Cys196/Cys205, Cys200/Cys213, Cys221/Cys228, Cys225/Cys236, Cys237/Cys245, Cys241/Cys253, Cys256/Cys265, Cys269/Cys296, Cys300/Cys312, Cys316/Cys332, Cys335/Cys339, Cys343/Cys368, Cys476/Cys506, Cys513/Cys522, and Cys517/Cys530. N-linked (GlcNAc...) asparagine glycosylation is present at Asn260. The N-linked (GlcNAc...) asparagine glycan is linked to Asn532. 8 disulfide bridges follow: Cys533–Cys542, Cys546–Cys562, Cys565–Cys578, Cys569–Cys586, Cys589–Cys598, Cys602–Cys625, Cys628–Cys636, and Cys632–Cys644. Asn573 carries an N-linked (GlcNAc...) asparagine glycan. N-linked (GlcNAc...) asparagine glycosylation occurs at Asn631. The helical transmembrane segment at 655 to 677 (FIIATVVGVLLFLILVVVVGILI) threads the bilayer. The segment at 678–691 (KRRRQKIRKYTMRR) is required for interaction with KPNB1 and EEA1. Residues 678-691 (KRRRQKIRKYTMRR) carry the Nuclear localization signal motif. Topologically, residues 678–1257 (KRRRQKIRKY…PEYLGLDVPV (580 aa)) are cytoplasmic. The region spanning 722–989 (LRKVKVLGSG…RMARDPQRFV (268 aa)) is the Protein kinase domain. ATP is bound by residues 728–736 (LGSGAFGTV) and Lys755. Catalysis depends on Asp847, which acts as the Proton acceptor. At Tyr879 the chain carries Phosphotyrosine. The interval 1029 to 1181 (QQGFFSPDPT…PKTLSPGKNG (153 aa)) is disordered. 4 positions are modified to phosphoserine: Ser1056, Ser1080, Ser1085, and Ser1109. At Tyr1114 the chain carries Phosphotyrosine. Tyr1141 carries the post-translational modification Phosphotyrosine; by autocatalysis. The segment covering 1149–1163 (PQPPLTPEGPLPPVR) has biased composition (pro residues). Residue Thr1168 is modified to Phosphothreonine. The tract at residues 1197–1199 (EYL) is interaction with PIK3C2B. Tyr1198 is modified (phosphotyrosine). Positions 1200–1257 (VPREGTASPPHPSPAFSPAFDNLYYWDQNSSEQGPPPSNFEGTPTAENPEYLGLDVPV) are disordered. Residue Tyr1250 is modified to Phosphotyrosine; by autocatalysis.

This sequence belongs to the protein kinase superfamily. Tyr protein kinase family. EGF receptor subfamily. As to quaternary structure, homodimer. Heterodimer with EGFR, ERBB3 and ERBB4. Part of a complex with EGFR and either PIK3C2A or PIK3C2B. May interact with PIK3C2B when phosphorylated on Tyr-1198. Interacts with PRKCABP and PLXNB1. Interacts (when phosphorylated on Tyr-1250) with MEMO1. Interacts with MUC1. Interacts (when phosphorylated on Tyr-1141) with GRB7 (via SH2 domain). Interacts (when phosphorylated on Tyr-1250) with ERBIN Interacts with SRC, KPNB1, RANBP2, EEA1, CRM1, CLTC, PTK6, RPA194, MYOC and ACTB. Interacts with HSP90AA1 and HSP90AB1; the interaction suppresses ERBB2 kinase activity. Interacts with SORL1; this interaction regulates ERBB2 subcellular distribution by promoting its recycling after internalization from endosomes back to the plasma membrane, hence stimulates ERBB2-mediated signaling. Interacts with SH3BGRL. Interacts with ROR1. Post-translationally, autophosphorylated. Autophosphorylation occurs in trans, i.e. one subunit of the dimeric receptor phosphorylates tyrosine residues on the other subunit. Ligand-binding increases phosphorylation on tyrosine residues. Signaling via SEMA4C promotes phosphorylation at Tyr-1250. Dephosphorylated by PTPN12.

The protein resides in the cell membrane. It localises to the cell projection. It is found in the ruffle membrane. Its subcellular location is the early endosome. The protein localises to the cytoplasm. The protein resides in the perinuclear region. It localises to the nucleus. It carries out the reaction L-tyrosyl-[protein] + ATP = O-phospho-L-tyrosyl-[protein] + ADP + H(+). Functionally, protein tyrosine kinase that is part of several cell surface receptor complexes, but that apparently needs a coreceptor for ligand binding. Essential component of a neuregulin-receptor complex, although neuregulins do not interact with it alone. GP30 is a potential ligand for this receptor. Regulates outgrowth and stabilization of peripheral microtubules (MTs). Upon ERBB2 activation, the MEMO1-RHOA-DIAPH1 signaling pathway elicits the phosphorylation and thus the inhibition of GSK3B at cell membrane. This prevents the phosphorylation of APC and CLASP2, allowing its association with the cell membrane. In turn, membrane-bound APC allows the localization of MACF1 to the cell membrane, which is required for microtubule capture and stabilization. Interacts (preferentially with the tyrosine phosphorylated form) with CPNE3; this interaction occurs at the cell membrane and is increased in a growth factor heregulin-dependent manner. In terms of biological role, in the nucleus is involved in transcriptional regulation. Associates with the 5'-TCAAATTC-3' sequence in the PTGS2/COX-2 promoter and activates its transcription. Implicated in transcriptional activation of CDKN1A; the function involves STAT3 and SRC. Involved in the transcription of rRNA genes by RNA Pol I and enhances protein synthesis and cell growth. This chain is Receptor tyrosine-protein kinase erbB-2 (Erbb2), found in Rattus norvegicus (Rat).